Reading from the N-terminus, the 127-residue chain is Large ribosomal subunit protein bL17 (127 aa).

Belongs to the bacterial ribosomal protein bL17 family. In terms of assembly, part of the 50S ribosomal subunit. Contacts protein L32.

The chain is Large ribosomal subunit protein bL17 from Xanthomonas oryzae pv. oryzae (strain KACC10331 / KXO85).